The chain runs to 214 residues: tRNA (guanine-N(7)-)-methyltransferase (214 aa).

S-adenosyl-L-methionine contacts are provided by D35, E60, N87, and D113. The active site involves D113. Positions 117 and 149 each coordinate substrate.

This sequence belongs to the class I-like SAM-binding methyltransferase superfamily. TrmB family.

The enzyme catalyses guanosine(46) in tRNA + S-adenosyl-L-methionine = N(7)-methylguanosine(46) in tRNA + S-adenosyl-L-homocysteine. Its pathway is tRNA modification; N(7)-methylguanine-tRNA biosynthesis. Catalyzes the formation of N(7)-methylguanine at position 46 (m7G46) in tRNA. This is tRNA (guanine-N(7)-)-methyltransferase from Prochlorococcus marinus (strain NATL1A).